The sequence spans 74 residues: RNA-binding protein Hfq (74 aa).

Positions Asp-9–Val-69 constitute a Sm domain.

This sequence belongs to the Hfq family. Homohexamer.

Its function is as follows. RNA chaperone that binds small regulatory RNA (sRNAs) and mRNAs to facilitate mRNA translational regulation in response to envelope stress, environmental stress and changes in metabolite concentrations. Also binds with high specificity to tRNAs. The polypeptide is RNA-binding protein Hfq (Anoxybacillus flavithermus (strain DSM 21510 / WK1)).